We begin with the raw amino-acid sequence, 366 residues long: MQYINIANRGVKSLSPYQAGKPIEELEREIGISNIVKLASNENPFGFPESAKKAIFEQLDKLTRYPDANGFELKQTIAKKFGVQPNQITLGNGSNDLLELFAHTFATEGDEIIYSQYAFIVYPLVTKAINAIAKEIPAKNWGHDLQGFLTALSDKTKLIYIANPNNPTGNFLTSQEIEDFLAKVPENVIVVLDEAYTEFTRSEERVDSFSLLKKYSNLIISRTLSKAYGLAGLRIGYAVSNPEIADLLNRVRQPFNCNSLALTAAVAVMNDDEFIEKVAENNRIEMRRYEDFCQKNQLDYIPSKGNFITIDFKQPAAPIYDALLREGVIVRPIAGYGMPNHLRISIGLPEENDKFFTALSKVLKFA.

N6-(pyridoxal phosphate)lysine is present on K226.

The protein belongs to the class-II pyridoxal-phosphate-dependent aminotransferase family. Histidinol-phosphate aminotransferase subfamily. As to quaternary structure, homodimer. Pyridoxal 5'-phosphate is required as a cofactor.

The catalysed reaction is L-histidinol phosphate + 2-oxoglutarate = 3-(imidazol-4-yl)-2-oxopropyl phosphate + L-glutamate. It participates in amino-acid biosynthesis; L-histidine biosynthesis; L-histidine from 5-phospho-alpha-D-ribose 1-diphosphate: step 7/9. This is Histidinol-phosphate aminotransferase 2 from Haemophilus influenzae (strain 86-028NP).